Here is a 346-residue protein sequence, read N- to C-terminus: SUMO-activating enzyme subunit 1 (346 aa).

At Met1 the chain carries N-acetylmethionine. Val2 carries the post-translational modification N-acetylvaline; in SUMO-activating enzyme subunit 1, N-terminally processed. Ser12 carries the post-translational modification Phosphoserine. Residue Lys198 is modified to N6-acetyllysine.

Belongs to the ubiquitin-activating E1 family. As to quaternary structure, heterodimer of SAE1 and UBA2/SAE2. The heterodimer corresponds to the two domains that are encoded on a single polypeptide chain in ubiquitin-activating enzyme E1. Interacts with UBE2I. Expression level increases during S phase and drops in G2 phase (at protein level).

It localises to the nucleus. It participates in protein modification; protein sumoylation. Its function is as follows. The heterodimer acts as an E1 ligase for SUMO1, SUMO2, SUMO3, and probably SUMO4. It mediates ATP-dependent activation of SUMO proteins followed by formation of a thioester bond between a SUMO protein and a conserved active site cysteine residue on UBA2/SAE2. In Homo sapiens (Human), this protein is SUMO-activating enzyme subunit 1 (SAE1).